The chain runs to 674 residues: Xaa-Pro aminopeptidase 2 (674 aa).

Positions 1-22 (MAQAYWQCYPWLVLLCACAWSY) are cleaved as a signal peptide. The N-linked (GlcNAc...) asparagine glycan is linked to asparagine 65. Residue arginine 116 participates in substrate binding. Residues asparagine 270, asparagine 278, and asparagine 293 are each glycosylated (N-linked (GlcNAc...) asparagine). Position 430 (histidine 430) interacts with substrate. Residues aspartate 450, aspartate 461, and histidine 524 each contribute to the Zn(2+) site. 3 residues coordinate substrate: histidine 524, histidine 533, and glutamate 555. Positions 555 and 569 each coordinate Zn(2+). Alanine 650 is lipidated: GPI-anchor amidated alanine. Residues 651 to 674 (RAPHIISWTSLWVASALAILSWSS) constitute a propeptide, removed in mature form.

Belongs to the peptidase M24B family. In terms of assembly, homotrimer. Zn(2+) is required as a cofactor. Post-translationally, N-glycosylated. As to expression, strongly expressed in small intestine, heart and lung. Also detected in testis, skeletal muscle, spleen, liver, kidney, brain, uterus, eye, lymph node, thymus, stomach, prostate and bone marrow.

The protein resides in the cell membrane. It catalyses the reaction Release of any N-terminal amino acid, including proline, that is linked to proline, even from a dipeptide or tripeptide.. In terms of biological role, membrane-bound metalloprotease which catalyzes the removal of a penultimate prolyl residue from the N-termini of peptides, such as Arg-Pro-Pro. May play a role in the metabolism of the vasodilator bradykinin. In Mus musculus (Mouse), this protein is Xaa-Pro aminopeptidase 2.